The chain runs to 150 residues: D-galactose-binding lectin (150 aa).

D-galactose is bound by residues His16 and Gly19. Residue Asn26 is glycosylated (N-linked (GlcNAc...) asparagine). D-galactose-binding positions include 35–37 (DIH), His64, and Gly67. An N-linked (GlcNAc...) asparagine glycan is attached at Asn74. D-galactose-binding positions include 83–85 (DRH), His108, and Gly111. Asn118 carries an N-linked (GlcNAc...) asparagine glycan. 127 to 129 (DEH) contacts D-galactose.

In terms of assembly, oligomerizes in solution. Post-translationally, the N-terminus is blocked. In terms of tissue distribution, expressed in mantle. Expressed 51 and 1.6 fold in mantle and gonads, respectively, relative to that in hemocytes. Expressed at a much lower level in other tissues tested including gill, muscle and hepatopancreas.

Hemagglutinating activity does not require Ca(2+) ions. Hemagglutinating activity is inhibited by porcine stomach mucin (PSM), bovine submaxillary mucin (BSM) and fetuin. Agglutination of V.proteolyticus bacteria is inhibited by D-galactose, but not by D-glucose. Fungal binding is inhibited by D-galactose, but not by pathogen-associated molecular patterns (PAMPs) including lipopolysaccharide (LPS), peptidoglycan and beta-glucan. D-galactose-binding lectin. Binds both alpha and beta anomer of galactose (Gal). Binds strongly to branched beta-Gal-terminated glycans and weakly to unbranched glycans with alpha-Gal on the end of chains. Has strong affinity for both Gal and GalNAc. Binds glycoproteins containing mucin-type chains. Has hemagglutinating activity towards human group A erythrocytes. Has hemagglutinating activity towards rabbit erythrocytes. Agglutinates V.proteolyticus bacteria. Binds strongly to fungi including species from genera Aspergillus, Alternaria, Fusarium and Haematonectria, and to a lesser extent to fungi from genera Trichoderma. Decreases conidia germination and hyphal growth of fungi. At high concentration, stimulates secretion of cytokines TNF-alpha and IFN-gamma from human peripheral blood cells, and at low concentration reduces hyperexpression of cytokine IL-10 in these cells, indicative of immunomodulatory capability. However, has no effect on IL-4 production. Recognizes pathogen-associated molecular patterns (PAMPs) and binds to peptidoglycan from S.aureus, but has only little binding to beta-1,3-glucan from E.gracilis and lipopolysaccharide (LPS) from E.coli. May be involved in innate immunity acting as an antibacterial or antifungal agent recognizing carbohydrate ligands on the surface of pathogens. This chain is D-galactose-binding lectin, found in Mytilus trossulus (Blue mussel).